The chain runs to 386 residues: S-adenosylmethionine synthase (386 aa).

An ATP-binding site is contributed by H16. Residue D18 coordinates Mg(2+). E44 is a K(+) binding site. Residues E57 and Q100 each coordinate L-methionine. The tract at residues 100-110 (QSRDITQGVDR) is flexible loop. Residues 165–167 (DAK), D240, 246–247 (RK), A263, and K267 contribute to the ATP site. D240 serves as a coordination point for L-methionine. An L-methionine-binding site is contributed by K271.

This sequence belongs to the AdoMet synthase family. Homotetramer; dimer of dimers. It depends on Mg(2+) as a cofactor. K(+) serves as cofactor.

Its subcellular location is the cytoplasm. It carries out the reaction L-methionine + ATP + H2O = S-adenosyl-L-methionine + phosphate + diphosphate. The protein operates within amino-acid biosynthesis; S-adenosyl-L-methionine biosynthesis; S-adenosyl-L-methionine from L-methionine: step 1/1. In terms of biological role, catalyzes the formation of S-adenosylmethionine (AdoMet) from methionine and ATP. The overall synthetic reaction is composed of two sequential steps, AdoMet formation and the subsequent tripolyphosphate hydrolysis which occurs prior to release of AdoMet from the enzyme. The protein is S-adenosylmethionine synthase of Francisella tularensis subsp. tularensis (strain WY96-3418).